We begin with the raw amino-acid sequence, 527 residues long: Bifunctional dihydrofolate reductase-thymidylate synthase (527 aa).

The DHFR domain maps to 28 to 238; that stretch reads PFSVVVASDE…KKYQFEKLVP (211 aa). Residue valine 32 coordinates substrate. NADP(+)-binding positions include alanine 34 and 40 to 46; that span reads GIGDGGT. Substrate is bound at residue aspartate 54. NADP(+) contacts are provided by residues 84–86 and 105–108; these read RKT and LSRS. Substrate contacts are provided by isoleucine 160, tyrosine 166, and threonine 184. 161-168 serves as a coordination point for NADP(+); the sequence is GGGTIYKQ. Residues 243–527 are thymidylate synthase; the sequence is EEQYLNLVGR…YPVISMEMAV (285 aa). Arginine 263 contributes to the dUMP binding site. The active site involves cysteine 409. Residues histidine 410, 428 to 432, asparagine 440, and 470 to 472 each bind dUMP; these read QRSCD and HVY.

In the N-terminal section; belongs to the dihydrofolate reductase family. The protein in the C-terminal section; belongs to the thymidylate synthase family. Homodimer.

The catalysed reaction is dUMP + (6R)-5,10-methylene-5,6,7,8-tetrahydrofolate = 7,8-dihydrofolate + dTMP. It carries out the reaction (6S)-5,6,7,8-tetrahydrofolate + NADP(+) = 7,8-dihydrofolate + NADPH + H(+). The protein operates within pyrimidine metabolism; dTTP biosynthesis. It functions in the pathway cofactor biosynthesis; tetrahydrofolate biosynthesis; 5,6,7,8-tetrahydrofolate from 7,8-dihydrofolate: step 1/1. Functionally, bifunctional enzyme. Involved in de novo dTMP biosynthesis. Key enzyme in folate metabolism. Catalyzes an essential reaction for de novo glycine and purine synthesis, DNA precursor synthesis, and for the conversion of dUMP to dTMP. The chain is Bifunctional dihydrofolate reductase-thymidylate synthase from Trypanosoma brucei brucei.